Here is a 348-residue protein sequence, read N- to C-terminus: GTPase Obg (348 aa).

One can recognise an Obg domain in the interval 1 to 160 (MHFLDQAKIF…MWVWLRLKLL (160 aa)). The interval 120–145 (RGGDGGRGNASYKTSTNRAPRQHGPG) is disordered. The OBG-type G domain occupies 161-328 (ADAGLVGLPN…VLDKLLEAIG (168 aa)). Residues 167–174 (GLPNAGKS), 192–196 (FTTLR), 213–216 (DIPG), 280–283 (NKID), and 309–311 (SGA) contribute to the GTP site. Mg(2+)-binding residues include S174 and T194. Positions 326–348 (AIGQPEPGPDADEEEKGGDWSPI) are disordered.

The protein belongs to the TRAFAC class OBG-HflX-like GTPase superfamily. OBG GTPase family. Monomer. It depends on Mg(2+) as a cofactor.

Its subcellular location is the cytoplasm. In terms of biological role, an essential GTPase which binds GTP, GDP and possibly (p)ppGpp with moderate affinity, with high nucleotide exchange rates and a fairly low GTP hydrolysis rate. Plays a role in control of the cell cycle, stress response, ribosome biogenesis and in those bacteria that undergo differentiation, in morphogenesis control. This Sphingopyxis alaskensis (strain DSM 13593 / LMG 18877 / RB2256) (Sphingomonas alaskensis) protein is GTPase Obg.